The chain runs to 118 residues: Large ribosomal subunit protein bL20 (118 aa).

It belongs to the bacterial ribosomal protein bL20 family.

Its function is as follows. Binds directly to 23S ribosomal RNA and is necessary for the in vitro assembly process of the 50S ribosomal subunit. It is not involved in the protein synthesizing functions of that subunit. The chain is Large ribosomal subunit protein bL20 from Shewanella baltica (strain OS223).